A 130-amino-acid polypeptide reads, in one-letter code: Small ribosomal subunit protein uS9 (130 aa).

It belongs to the universal ribosomal protein uS9 family.

In Burkholderia multivorans (strain ATCC 17616 / 249), this protein is Small ribosomal subunit protein uS9.